We begin with the raw amino-acid sequence, 427 residues long: Putative F-box protein At3g44060 (427 aa).

An F-box domain is found at 1 to 46 (MDCLPDDLLVQILYLLPTKEAVSTSVLSKRWRTLFTRSDNLDFHDP).

The protein is Putative F-box protein At3g44060 of Arabidopsis thaliana (Mouse-ear cress).